The primary structure comprises 504 residues: D-alanine--D-alanyl carrier protein ligase (504 aa).

Residue 152-153 (TS) coordinates ATP. D197 contacts D-alanine. 292 to 297 (NTYGPT) is a binding site for ATP. Residue V301 participates in D-alanine binding. Residues D383, 394–397 (YNGR), and K492 contribute to the ATP site. K492 is a D-alanine binding site.

Belongs to the ATP-dependent AMP-binding enzyme family. DltA subfamily.

It localises to the cytoplasm. The catalysed reaction is holo-[D-alanyl-carrier protein] + D-alanine + ATP = D-alanyl-[D-alanyl-carrier protein] + AMP + diphosphate. It participates in cell wall biogenesis; lipoteichoic acid biosynthesis. Catalyzes the first step in the D-alanylation of lipoteichoic acid (LTA), the activation of D-alanine and its transfer onto the D-alanyl carrier protein (Dcp) DltC. In an ATP-dependent two-step reaction, forms a high energy D-alanyl-AMP intermediate, followed by transfer of the D-alanyl residue as a thiol ester to the phosphopantheinyl prosthetic group of the Dcp. D-alanylation of LTA plays an important role in modulating the properties of the cell wall in Gram-positive bacteria, influencing the net charge of the cell wall. This Bacillus cytotoxicus (strain DSM 22905 / CIP 110041 / 391-98 / NVH 391-98) protein is D-alanine--D-alanyl carrier protein ligase.